We begin with the raw amino-acid sequence, 430 residues long: Tyrosine--tRNA ligase (430 aa).

Position 32 (Tyr32) interacts with L-tyrosine. A 'HIGH' region motif is present at residues Pro37 to His46. Positions 172 and 176 each coordinate L-tyrosine. Residues Lys232–Thr236 carry the 'KMSKS' region motif. Lys235 provides a ligand contact to ATP. The S4 RNA-binding domain occupies Val362–Ala429.

This sequence belongs to the class-I aminoacyl-tRNA synthetase family. TyrS type 1 subfamily. Homodimer.

The protein localises to the cytoplasm. It carries out the reaction tRNA(Tyr) + L-tyrosine + ATP = L-tyrosyl-tRNA(Tyr) + AMP + diphosphate + H(+). Its function is as follows. Catalyzes the attachment of tyrosine to tRNA(Tyr) in a two-step reaction: tyrosine is first activated by ATP to form Tyr-AMP and then transferred to the acceptor end of tRNA(Tyr). This Bacteroides fragilis (strain YCH46) protein is Tyrosine--tRNA ligase.